Consider the following 145-residue polypeptide: Large ribosomal subunit protein bL19 (145 aa).

The protein belongs to the bacterial ribosomal protein bL19 family.

Its function is as follows. This protein is located at the 30S-50S ribosomal subunit interface and may play a role in the structure and function of the aminoacyl-tRNA binding site. The sequence is that of Large ribosomal subunit protein bL19 from Brachyspira hyodysenteriae (strain ATCC 49526 / WA1).